A 507-amino-acid chain; its full sequence is MAEEQARHVKNGLECIRALKAEPIGSLAIEEAMAAWSEISDNPGQERATCREEKAGSSGLSKPCLSAIGSTEGGAPRIRGQGPGESDDDAETLGIPPRNLQASSTGLQCYYVYDHSGEAVKGIQDADSIMVQSGLDGDSTLSGGDNESENSDVDIGEPDTEGYAITDRGSAPISMGFRASDVETAEGGEIHELLRLQSRGNNFPKLGKTLNVPPPPDPGRASTSGTPIKKGTERRLASFGTEIASLLTGGATQCARKSPSEPSGPGAPAGNVPECVSNAALIQEWTPESGTTISPRSQNNEEGGDYYDDELFSDVQDIKTALAKIHEDNQKIISKLESLLLLKGEVESIKKQINRQNISISTLEGHLSSIMIAIPGLGKDPNDPTADVEINPDLKPIIGRDSGRALAEVLKKPVASRQLQGMTNGRTSSRGQLLKEFQLKPIGKKMSSAVGFVPDTGPASRSVIRSIIKSSRLEEDRKRYLMTLLDDIKGANDLAKFHQMLMKIIMK.

The interaction with N0 stretch occupies residues 1–48; that stretch reads MAEEQARHVKNGLECIRALKAEPIGSLAIEEAMAAWSEISDNPGQERA. Disordered stretches follow at residues 41–99, 134–163, 201–231, and 250–273; these read DNPG…PPRN, GLDGDSTLSGGDNESENSDVDIGEPDTEGY, NNFPKLGKTLNVPPPPDPGRASTSGTPIKKG, and GATQCARKSPSEPSGPGAPAGNVP. Ser86 is subject to Phosphoserine. A compositionally biased stretch (low complexity) spans 134-145; that stretch reads GLDGDSTLSGGD. Acidic residues predominate over residues 146 to 160; sequence NESENSDVDIGEPDT. Ser151 carries the post-translational modification Phosphoserine. The segment covering 260 to 270 has biased composition (low complexity); sequence SEPSGPGAPAG. The interval 304–376 is multimerization; that stretch reads GDYYDDELFS…LSSIMIAIPG (73 aa). Interaction with the L polymerase stretches follow at residues 361–377 and 396–410; these read STLEGHLSSIMIAIPGL and PIIGRDSGRALAEVL. The tract at residues 457-507 is x domain (XD); it reads GPASRSVIRSIIKSSRLEEDRKRYLMTLLDDIKGANDLAKFHQMLMKIIMK. The tract at residues 459–507 is interaction with the nucleocapsid (N-RNA); the sequence is ASRSVIRSIIKSSRLEEDRKRYLMTLLDDIKGANDLAKFHQMLMKIIMK.

It belongs to the morbillivirus P protein family. In terms of assembly, homotetramer. Interacts (via multimerization domain and XD domain) with polymerase L; this interaction forms the polymerase L-P complex. Interacts (via N-terminus) with N0 (via Ncore); this interaction allows P to chaperon N0 to avoid N polymerization and non-specific RNA binding before encapsidation. Interacts (via C-terminus) with N-RNA template (via Ntail); this interaction maintains the P/L complex anchored to the nucleocapsid template during the sequential transcription. Interacts (via C-terminus) with protein C this interaction allows C to associate with the ribonucleocapsid. Phosphorylation on serines by host CK2 is necessary for the formation of viral factories.

Essential cofactor of the RNA polymerase L that plays a central role in the transcription and replication by forming the polymerase complex with RNA polymerase L and recruiting L to the genomic N-RNA template for RNA synthesis. Also plays a central role in the encapsidation of nascent RNA chains by forming the encapsidation complex with the nucleocapsid protein N (N-P complex). Acts as a chaperone for newly synthesized free N protein, so-called N0, allowing encapsidation of nascent RNA chains during replication. The nucleoprotein protein N prevents excessive phosphorylation of P, which leads to down-regulation of viral transcription/ replication. Participates, together with N, in the formation of viral factories (viroplasms), which are large inclusions in the host cytoplasm where replication takes place. The protein is Phosphoprotein (P/V) of Measles virus (strain Edmonston) (MeV).